The following is a 328-amino-acid chain: DNA-directed RNA polymerase subunit alpha (328 aa).

Residues methionine 1–asparagine 244 are alpha N-terminal domain (alpha-NTD). An alpha C-terminal domain (alpha-CTD) region spans residues lysine 261–serine 328.

The protein belongs to the RNA polymerase alpha chain family. Homodimer. The RNAP catalytic core consists of 2 alpha, 1 beta, 1 beta' and 1 omega subunit. When a sigma factor is associated with the core the holoenzyme is formed, which can initiate transcription.

It carries out the reaction RNA(n) + a ribonucleoside 5'-triphosphate = RNA(n+1) + diphosphate. Its function is as follows. DNA-dependent RNA polymerase catalyzes the transcription of DNA into RNA using the four ribonucleoside triphosphates as substrates. In Mycoplasma genitalium (strain ATCC 33530 / DSM 19775 / NCTC 10195 / G37) (Mycoplasmoides genitalium), this protein is DNA-directed RNA polymerase subunit alpha.